We begin with the raw amino-acid sequence, 63 residues long: Protein DsrB (63 aa).

It belongs to the DsrB family.

This Yersinia pseudotuberculosis serotype O:1b (strain IP 31758) protein is Protein DsrB.